Here is a 113-residue protein sequence, read N- to C-terminus: MHEMSLMESVIEIVCETARQNGATRVKSVRLDVGVLSHVNPDALIFCYEAVRHGTVADSATLEINRIAGEGWCLDCGKTVALEERFGACPDCGRHRVQMTAGDELKIRDMEVI.

His2 provides a ligand contact to Ni(2+). Zn(2+) is bound by residues Cys73, Cys76, Cys89, and Cys92.

This sequence belongs to the HypA/HybF family.

Involved in the maturation of [NiFe] hydrogenases. Required for nickel insertion into the metal center of the hydrogenase. The chain is Hydrogenase maturation factor HypA from Rhizobium leguminosarum bv. viciae.